The primary structure comprises 472 residues: MATAVSTVGAATRAPLNLNGSSAGASVPTSGFLGSSLKKHTNVRFPSSSRTTSMTVKAAENEEKNTDKWAHLAKDFSDDQLDIRRGKGMVDSLFQAPADAGTHVPIQSSFEYESQGLRKYDIDNMLGDFYIAPAFMDKLVVHITKNFLNLPNIKIPLILGVWGGKGQGKSFQCELVFAKLGINPIMMSAGELESGNAGEPAKLIRQRYREAADLIAKGKMCALFINDLEPGAGRMGGTTQYTVNNQMVNATLMNIADNPTNVQLPGMYNKQDNARVPIIVTGNDFSTLYAPLIRDGRMEKFYWAPTREDRIGVCTGIFKTDKVPAEHVVKLVDAFPGQSIDFFGALRARVYHDEVRKWVNSVGVDNVGKKLVNSKDGPPVFEQPEMTLQKLMEYGNMLVQEQENVKRVQLADQYMSSAALGDANKDAIDRGTFFGKAAQQVSLPVAQGCTDPEAKNYDPTARSDDGSCTYNL.

Residues 1 to 58 (MATAVSTVGAATRAPLNLNGSSAGASVPTSGFLGSSLKKHTNVRFPSSSRTTSMTVKA) constitute a chloroplast transit peptide. Residue 163–170 (GGKGQGKS) coordinates ATP. The disordered stretch occupies residues 448–472 (GCTDPEAKNYDPTARSDDGSCTYNL). Basic and acidic residues predominate over residues 452–465 (PEAKNYDPTARSDD).

It belongs to the RuBisCO activase family.

It localises to the plastid. The protein localises to the chloroplast stroma. Functionally, activation of RuBisCO (ribulose-1,5-bisphosphate carboxylase/oxygenase; EC 4.1.1.39) involves the ATP-dependent carboxylation of the epsilon-amino group of lysine leading to a carbamate structure. This Spinacia oleracea (Spinach) protein is Ribulose bisphosphate carboxylase/oxygenase activase, chloroplastic.